Here is an 83-residue protein sequence, read N- to C-terminus: MSGPNGDLGMPVEAGAEGEEDGFGEAEYAAINSMLDQINSCLDHLEEKNDHLHARLQELLESNRQTRLEFQQQLGEAPSDASP.

The segment at 1-24 is disordered; the sequence is MSGPNGDLGMPVEAGAEGEEDGFG. A coiled-coil region spans residues 25 to 74; sequence EAEYAAINSMLDQINSCLDHLEEKNDHLHARLQELLESNRQTRLEFQQQL. Ser-82 carries the phosphoserine modification.

This sequence belongs to the UPF0184 (EST00098) family.

It localises to the cell junction. The protein localises to the cytoplasm. It is found in the cytoskeleton. In terms of biological role, essential for intermediate filament organization in intestinal cells, interacts with intermediate filament and regulates intestinal lumen morphology. This Homo sapiens (Human) protein is Bublin coiled-coil protein.